The sequence spans 623 residues: V-type proton ATPase catalytic subunit A (623 aa).

252–259 (GAFGCGKT) is a binding site for ATP.

The protein belongs to the ATPase alpha/beta chains family. In terms of assembly, V-ATPase is a heteromultimeric enzyme composed of a peripheral catalytic V1 complex (main components: subunits A, B, C, D, E, and F) attached to an integral membrane V0 proton pore complex (main component: the proteolipid protein).

It catalyses the reaction ATP + H2O + 4 H(+)(in) = ADP + phosphate + 5 H(+)(out). Catalytic subunit of the peripheral V1 complex of vacuolar ATPase. V-ATPase vacuolar ATPase is responsible for acidifying a variety of intracellular compartments in eukaryotic cells. In Gossypium hirsutum (Upland cotton), this protein is V-type proton ATPase catalytic subunit A (CVA69.24).